The chain runs to 496 residues: Sporulation-killing factor biosynthesis protein SkfC (496 aa).

Helical transmembrane passes span M1 to I21, V224 to M244, T248 to L268, L291 to C311, I331 to L351, L399 to S419, and F443 to V463.

The protein resides in the membrane. Required for production of the bacteriocin SkfA. The polypeptide is Sporulation-killing factor biosynthesis protein SkfC (Bacillus subtilis (strain 168)).